Consider the following 120-residue polypeptide: Glycine cleavage system H protein (120 aa).

The 83-residue stretch at 17 to 99 (IATVGITAHA…RGAGWFFKLK (83 aa)) folds into the Lipoyl-binding domain. At K58 the chain carries N6-lipoyllysine.

The protein belongs to the GcvH family. As to quaternary structure, the glycine cleavage system is composed of four proteins: P, T, L and H. (R)-lipoate is required as a cofactor.

The glycine cleavage system catalyzes the degradation of glycine. The H protein shuttles the methylamine group of glycine from the P protein to the T protein. The polypeptide is Glycine cleavage system H protein (Allorhizobium ampelinum (strain ATCC BAA-846 / DSM 112012 / S4) (Agrobacterium vitis (strain S4))).